Reading from the N-terminus, the 391-residue chain is Chalcone synthase (391 aa).

Cysteine 164 is a catalytic residue.

The protein belongs to the thiolase-like superfamily. Chalcone/stilbene synthases family.

The enzyme catalyses (E)-4-coumaroyl-CoA + 3 malonyl-CoA + 3 H(+) = 2',4,4',6'-tetrahydroxychalcone + 3 CO2 + 4 CoA. It functions in the pathway secondary metabolite biosynthesis; flavonoid biosynthesis. Its function is as follows. The primary product of this enzyme is 4,2',4',6'-tetrahydroxychalcone (also termed naringenin-chalcone or chalcone) which can under specific conditions spontaneously isomerize into naringenin. The polypeptide is Chalcone synthase (CHS) (Dianthus caryophyllus (Carnation)).